A 296-amino-acid chain; its full sequence is Cytidine deaminase (296 aa).

CMP/dCMP-type deaminase domains are found at residues 47–167 (AESE…FGPS) and 186–296 (DSSD…LDPE). 88 to 90 (NME) lines the substrate pocket. His-101 serves as a coordination point for Zn(2+). Glu-103 serves as the catalytic Proton donor. Zn(2+) contacts are provided by Cys-128 and Cys-131.

It belongs to the cytidine and deoxycytidylate deaminase family. Homodimer. It depends on Zn(2+) as a cofactor.

The enzyme catalyses cytidine + H2O + H(+) = uridine + NH4(+). The catalysed reaction is 2'-deoxycytidine + H2O + H(+) = 2'-deoxyuridine + NH4(+). Functionally, this enzyme scavenges exogenous and endogenous cytidine and 2'-deoxycytidine for UMP synthesis. The sequence is that of Cytidine deaminase from Shewanella sediminis (strain HAW-EB3).